The sequence spans 361 residues: Tyrosine--tRNA ligase (361 aa).

Residues tyrosine 36, tyrosine 162, glutamine 166, aspartate 169, and glutamine 184 each contribute to the L-tyrosine site. A 'KMSKS' region motif is present at residues 236-240 (KMSKS). Lysine 239 serves as a coordination point for ATP.

The protein belongs to the class-I aminoacyl-tRNA synthetase family. TyrS type 4 subfamily. Homodimer.

The protein resides in the cytoplasm. The enzyme catalyses tRNA(Tyr) + L-tyrosine + ATP = L-tyrosyl-tRNA(Tyr) + AMP + diphosphate + H(+). Catalyzes the attachment of tyrosine to tRNA(Tyr) in a two-step reaction: tyrosine is first activated by ATP to form Tyr-AMP and then transferred to the acceptor end of tRNA(Tyr). The protein is Tyrosine--tRNA ligase of Saccharolobus islandicus (strain L.S.2.15 / Lassen #1) (Sulfolobus islandicus).